We begin with the raw amino-acid sequence, 194 residues long: Probable nicotinate-nucleotide adenylyltransferase (194 aa).

The protein belongs to the NadD family.

It catalyses the reaction nicotinate beta-D-ribonucleotide + ATP + H(+) = deamido-NAD(+) + diphosphate. The protein operates within cofactor biosynthesis; NAD(+) biosynthesis; deamido-NAD(+) from nicotinate D-ribonucleotide: step 1/1. Its function is as follows. Catalyzes the reversible adenylation of nicotinate mononucleotide (NaMN) to nicotinic acid adenine dinucleotide (NaAD). This Christiangramia forsetii (strain DSM 17595 / CGMCC 1.15422 / KT0803) (Gramella forsetii) protein is Probable nicotinate-nucleotide adenylyltransferase.